A 128-amino-acid chain; its full sequence is Large ribosomal subunit protein bL20 (128 aa).

This sequence belongs to the bacterial ribosomal protein bL20 family.

Binds directly to 23S ribosomal RNA and is necessary for the in vitro assembly process of the 50S ribosomal subunit. It is not involved in the protein synthesizing functions of that subunit. The protein is Large ribosomal subunit protein bL20 of Corynebacterium efficiens (strain DSM 44549 / YS-314 / AJ 12310 / JCM 11189 / NBRC 100395).